Reading from the N-terminus, the 902-residue chain is HTH-type transcriptional regulator MalT (902 aa).

39–46 contributes to the ATP binding site; the sequence is SPAGYGKT. An HTH luxR-type domain is found at 832-897; that stretch reads ELVRTSPLTQ…EAVQTAEQLL (66 aa). The segment at residues 856–875 is a DNA-binding region (H-T-H motif); it reads NEQIAHELDVAGTTIKTHIR.

It belongs to the MalT family. Monomer in solution. Oligomerizes to an active state in the presence of the positive effectors ATP and maltotriose.

Its activity is regulated as follows. Activated by ATP and maltotriose, which are both required for DNA binding. In terms of biological role, positively regulates the transcription of the maltose regulon whose gene products are responsible for uptake and catabolism of malto-oligosaccharides. Specifically binds to the promoter region of its target genes, recognizing a short DNA motif called the MalT box. This chain is HTH-type transcriptional regulator MalT, found in Vibrio cholerae serotype O1 (strain ATCC 39315 / El Tor Inaba N16961).